Consider the following 895-residue polypeptide: Alanine--tRNA ligase (895 aa).

Residues H577, H581, C680, and H684 each coordinate Zn(2+).

This sequence belongs to the class-II aminoacyl-tRNA synthetase family. The cofactor is Zn(2+).

The protein resides in the cytoplasm. The catalysed reaction is tRNA(Ala) + L-alanine + ATP = L-alanyl-tRNA(Ala) + AMP + diphosphate. Functionally, catalyzes the attachment of alanine to tRNA(Ala) in a two-step reaction: alanine is first activated by ATP to form Ala-AMP and then transferred to the acceptor end of tRNA(Ala). Also edits incorrectly charged Ser-tRNA(Ala) and Gly-tRNA(Ala) via its editing domain. This is Alanine--tRNA ligase from Kocuria rhizophila (strain ATCC 9341 / DSM 348 / NBRC 103217 / DC2201).